The primary structure comprises 1190 residues: DNA-directed RNA polymerase subunit beta (1190 aa).

Residues 1155–1190 (ENFDDDDDHAPDAIMVDVKPAEREEAGEEKDAVTKE) form a disordered region. The segment covering 1173–1190 (KPAEREEAGEEKDAVTKE) has biased composition (basic and acidic residues).

The protein belongs to the RNA polymerase beta chain family. The RNAP catalytic core consists of 2 alpha, 1 beta, 1 beta' and 1 omega subunit. When a sigma factor is associated with the core the holoenzyme is formed, which can initiate transcription.

The enzyme catalyses RNA(n) + a ribonucleoside 5'-triphosphate = RNA(n+1) + diphosphate. Functionally, DNA-dependent RNA polymerase catalyzes the transcription of DNA into RNA using the four ribonucleoside triphosphates as substrates. This chain is DNA-directed RNA polymerase subunit beta, found in Geobacillus kaustophilus (strain HTA426).